The primary structure comprises 250 residues: Triosephosphate isomerase (250 aa).

9–11 lines the substrate pocket; sequence NWK. The active-site Electrophile is the H94. The Proton acceptor role is filled by E166. Substrate-binding positions include G172, S212, and 233–234; that span reads GG.

This sequence belongs to the triosephosphate isomerase family. In terms of assembly, homodimer.

It is found in the cytoplasm. The enzyme catalyses D-glyceraldehyde 3-phosphate = dihydroxyacetone phosphate. The protein operates within carbohydrate biosynthesis; gluconeogenesis. Its pathway is carbohydrate degradation; glycolysis; D-glyceraldehyde 3-phosphate from glycerone phosphate: step 1/1. In terms of biological role, involved in the gluconeogenesis. Catalyzes stereospecifically the conversion of dihydroxyacetone phosphate (DHAP) to D-glyceraldehyde-3-phosphate (G3P). This is Triosephosphate isomerase from Treponema denticola (strain ATCC 35405 / DSM 14222 / CIP 103919 / JCM 8153 / KCTC 15104).